The primary structure comprises 206 residues: MTAMQPGTRVGRVERTTRESSVLVELDLDGTGQVDIDTTVPFYDHMLTALGTHAAFDLKVKSSGDVHIDAHHTVEDTAIVFGQALRQALGGKLGIRRFGDAWIPMDETLAHAAVDVSGRSYCVMTGEPEQYNSFTIGGNYPFVLNRHVFESIAFHSQINLHVRVIHGRDPHHIAEAQYKAIARALRAAVEPDPRFSGVVPSTKGAL.

The protein belongs to the imidazoleglycerol-phosphate dehydratase family.

The protein resides in the cytoplasm. The enzyme catalyses D-erythro-1-(imidazol-4-yl)glycerol 3-phosphate = 3-(imidazol-4-yl)-2-oxopropyl phosphate + H2O. It participates in amino-acid biosynthesis; L-histidine biosynthesis; L-histidine from 5-phospho-alpha-D-ribose 1-diphosphate: step 6/9. The chain is Imidazoleglycerol-phosphate dehydratase from Saccharopolyspora erythraea (strain ATCC 11635 / DSM 40517 / JCM 4748 / NBRC 13426 / NCIMB 8594 / NRRL 2338).